A 244-amino-acid chain; its full sequence is Methylthioribulose-1-phosphate dehydratase (244 aa).

A substrate-binding site is contributed by C89. 2 residues coordinate Zn(2+): H107 and H109. Residue E130 is the Proton donor/acceptor of the active site. H192 lines the Zn(2+) pocket.

It belongs to the aldolase class II family. MtnB subfamily. The cofactor is Zn(2+).

It is found in the cytoplasm. It catalyses the reaction 5-(methylsulfanyl)-D-ribulose 1-phosphate = 5-methylsulfanyl-2,3-dioxopentyl phosphate + H2O. Its pathway is amino-acid biosynthesis; L-methionine biosynthesis via salvage pathway; L-methionine from S-methyl-5-thio-alpha-D-ribose 1-phosphate: step 2/6. Catalyzes the dehydration of methylthioribulose-1-phosphate (MTRu-1-P) into 2,3-diketo-5-methylthiopentyl-1-phosphate (DK-MTP-1-P). The protein is Methylthioribulose-1-phosphate dehydratase of Saccharomyces cerevisiae (strain YJM789) (Baker's yeast).